Consider the following 254-residue polypeptide: Putative epimerase LsrE (254 aa).

A helical transmembrane segment spans residues 14-34; it reads VALLASYPLSVGILAGQWIAL. A divalent metal cation contacts are provided by His50, Asp52, and His81. Asp52 acts as the Proton acceptor in catalysis. Substrate-binding positions include His81, 166 to 169, 199 to 201, and 221 to 222; these read GYGS, DGS, and GS. Asp199 is a binding site for a divalent metal cation. Asp199 functions as the Proton donor in the catalytic mechanism.

It belongs to the ribulose-phosphate 3-epimerase family. Requires a divalent metal cation as cofactor.

It is found in the cell membrane. The sequence is that of Putative epimerase LsrE (lsrE) from Salmonella typhi.